The chain runs to 430 residues: MFQQLSARLQEAIGRLRGRGRITEEDLKATLREIRRALMDADVNLEVARDFVERVREEALGKQVLESLTPAEVILATVYEALKEALGGEARLPVLKDRNLWFLVGLQGSGKTTTAAKLALYYKGKGRRPLLVAADTQRPAAREQLRLLGEKVGVPVLEVMDGESPESIRRRVEEKARLEARDLILVDTAGRLQIDEPLMGELARLKEVLGPDEVLLVLDAMTGQEALSVARAFDEKVGVTGLVLTKLDGDARGGAALSARHVTGKPIYFAGVSEKPEGLEPFYPERLAGRILGMGDVASLAEKVRAAGLEAEAPKSAKELSLEDFLKQMQNLKRLGPFSEILGLLPGVPQGLKVDEKAIKRLEAIVLSMTPEERKDPRILNGSRRKRIAKGSGTSVQEVNRFIKAFEEMKALMKSLEKKKGRGLMGMFRR.

GTP-binding positions include 105–112 (GLQGSGKT), 187–191 (DTAGR), and 245–248 (TKLD).

Belongs to the GTP-binding SRP family. SRP54 subfamily. Part of the signal recognition particle protein translocation system, which is composed of SRP and FtsY.

It localises to the cytoplasm. The enzyme catalyses GTP + H2O = GDP + phosphate + H(+). In terms of biological role, involved in targeting and insertion of nascent membrane proteins into the cytoplasmic membrane. Binds to the hydrophobic signal sequence of the ribosome-nascent chain (RNC) as it emerges from the ribosomes. The SRP-RNC complex is then targeted to the cytoplasmic membrane where it interacts with the SRP receptor FtsY. The polypeptide is Signal recognition particle protein (Thermus aquaticus).